The following is a 1022-amino-acid chain: Collagen alpha-1(I) chain (1022 aa).

Residues 1 to 1022 (SAGGISVPGP…PGPPGPPGPP (1022 aa)) form a disordered region. Residues P20, P23, P26, P35, P38, P41, P56, P71, P77, P86, and P92 each carry the 4-hydroxyproline modification. Low complexity predominate over residues 28 to 47 (PQGFQGPPGEPGEPGASGPM). Basic and acidic residues predominate over residues 59 to 73 (NGDDGEAGKPGRPGE). At K95 the chain carries 5-hydroxylysine; alternate. K95 is a glycosylation site (O-linked (Gal...) hydroxylysine; alternate). Phosphoserine is present on S101. Over residues 109-125 (DAGPAGPKGEPGSPGEN) the composition is skewed to low complexity. 16 positions are modified to 4-hydroxyproline: P119, P122, P128, P137, P143, P164, P173, P176, P203, P206, P218, P224, P233, P239, P242, and P257. A compositionally biased stretch (low complexity) spans 143–161 (PGASGPAGARGNDGAAGAA). Over residues 163-175 (PPGPTGPAGPPGF) the composition is skewed to pro residues. Over residues 209 to 259 (AGAAGPAGNPGADGQPGAKGANGAPGIAGAPGFPGARGPSGPQGPSGAPGP) the composition is skewed to low complexity. Position 260 is a 5-hydroxylysine (K260). A 4-hydroxyproline mark is found at P266, P269, P281, P290, P305, P311, P320, and P326. Positions 315-324 (GERGGPGSRG) are enriched in gly residues. K335 is subject to 5-hydroxylysine. 4-hydroxyproline is present on residues P344, P353, P359, P365, P374, P377, P386, P395, P401, P413, P422, P431, P434, P452, P470, P476, P482, P488, P494, P500, P512, P521, P533, P545, P548, P554, P560, and P569. Over residues 368 to 394 (KGLTGSPGSPGPDGKTGPPGPAGQDGR) the composition is skewed to low complexity. Residues 403–422 (ARGQAGVMGFPGPKGAAGEP) show a composition bias toward low complexity. Positions 464-491 (QGPAGSPGFQGLPGPAGPPGEAGKPGEQ) are enriched in low complexity. The span at 530–557 (NGAPGNDGAKGDAGAPGAPGSQGAPGLQ) shows a compositional bias: low complexity. K581 carries the post-translational modification 5-hydroxylysine. 4-hydroxyproline occurs at positions 587, 602, and 608. Residues 614-628 (SGPSGPAGPTGARGA) are compositionally biased toward low complexity. S617 is subject to Phosphoserine. 4-hydroxyproline is present on residues P629, P635, P638, P647, P653, P671, P680, and P689. Over residues 641 to 668 (AGFAGPPGADGQPGAKGEPGDAGAKGDA) the composition is skewed to low complexity. Over residues 670-682 (PPGPAGPTGPPGP) the composition is skewed to pro residues. K692 carries the 5-hydroxylysine modification. A compositionally biased stretch (low complexity) spans 697–713 (SAGPPGATGFPGAAGRV). P701 and P707 each carry 4-hydroxyproline. P715 bears the 3-hydroxyproline mark. Residues P716, P725, P728, P749, P758, P767, P776, P794, P803, P806, P812, P827, P833, P839, P848, and P854 each carry the 4-hydroxyproline modification. Low complexity predominate over residues 742 to 751 (ETGPAGRPGE). Residues 761-776 (TGEKGSPGADGPAGAP) are compositionally biased toward low complexity. Residues 826-836 (PPGPVGPPGLA) are compositionally biased toward pro residues. Positions 838–853 (PPGESGREGSPGAEGS) are enriched in low complexity. Residue K863 is modified to 5-hydroxylysine. Positions 872-887 (AGPPGAPGAPGAPGPV) are enriched in pro residues. 3 positions are modified to 4-hydroxyproline: P875, P878, and P881. Over residues 908-922 (AGPAGARGPAGPQGP) the composition is skewed to low complexity. The segment covering 923–937 (RGDKGETGEQGDRGI) has biased composition (basic and acidic residues). The residue at position 926 (K926) is a 5-hydroxylysine. A 5-hydroxylysine; alternate modification is found at K938. K938 is a glycosylation site (O-linked (Gal...) hydroxylysine; alternate). 4-hydroxyproline occurs at positions 953, 956, 974, and 989. Residues 956–989 (PGEQGPSGASGPAGPRGPPGSAGSPGKDGLNGLP) are compositionally biased toward low complexity. A 3-hydroxyproline modification is found at P994. A 4-hydroxyproline modification is found at P995. Over residues 1007-1022 (VGPPGPPGPPGPPGPP) the composition is skewed to pro residues. P1009 bears the 3-hydroxyproline mark. P1010 carries the 4-hydroxyproline modification. A 3-hydroxyproline modification is found at P1012. At P1013 the chain carries 4-hydroxyproline. A 3-hydroxyproline modification is found at P1015. 3 positions are modified to 4-hydroxyproline: P1016, P1019, and P1022.

This sequence belongs to the fibrillar collagen family. In terms of assembly, trimers of one alpha 2(I) and two alpha 1(I) chains. In terms of processing, prolines at the third position of the tripeptide repeating unit (G-X-Y) are hydroxylated in some or all of the chains. As to expression, expressed in bone.

Its subcellular location is the secreted. The protein resides in the extracellular space. The protein localises to the extracellular matrix. In terms of biological role, type I collagen is a member of group I collagen (fibrillar forming collagen). The polypeptide is Collagen alpha-1(I) chain (Mylodon darwinii (Giant ground sloth)).